Consider the following 199-residue polypeptide: MMEFVYPHTHLVAGVDEVGRGPLVGAVVTAAVILDPAKPIVGLNDSKKLSEKRRLALFDEIKEKALCWSLGRAEPHEIDELNILHATMLAMQRAVAGLSIVPEFVLIDGNRCPSLPMPSQAVVKGDSRVAEISAASILAKVTRDAEMATLDLAFPHYGFAQHKGYPTAVHLQKLQEHGATEHHRRSFGPVKRALGLASN.

In terms of domain architecture, RNase H type-2 spans 10 to 199 (HLVAGVDEVG…VKRALGLASN (190 aa)). 3 residues coordinate a divalent metal cation: Asp16, Glu17, and Asp108.

This sequence belongs to the RNase HII family. It depends on Mn(2+) as a cofactor. The cofactor is Mg(2+).

It localises to the cytoplasm. The enzyme catalyses Endonucleolytic cleavage to 5'-phosphomonoester.. Endonuclease that specifically degrades the RNA of RNA-DNA hybrids. The chain is Ribonuclease HII from Klebsiella pneumoniae subsp. pneumoniae (strain ATCC 700721 / MGH 78578).